The primary structure comprises 645 residues: UvrABC system protein C (645 aa).

One can recognise a GIY-YIG domain in the interval 12 to 91; the sequence is TGPGVYLYKN…IKQRKPRFNV (80 aa). The region spanning 202–237 is the UVR domain; the sequence is ADLERSLEVRMQEAAAAEQFELAAKYRDLLVTLHQL.

It belongs to the UvrC family. Interacts with UvrB in an incision complex.

Its subcellular location is the cytoplasm. The UvrABC repair system catalyzes the recognition and processing of DNA lesions. UvrC both incises the 5' and 3' sides of the lesion. The N-terminal half is responsible for the 3' incision and the C-terminal half is responsible for the 5' incision. This is UvrABC system protein C from Acidobacterium capsulatum (strain ATCC 51196 / DSM 11244 / BCRC 80197 / JCM 7670 / NBRC 15755 / NCIMB 13165 / 161).